Reading from the N-terminus, the 479-residue chain is Ribosomal RNA small subunit methyltransferase F (479 aa).

S-adenosyl-L-methionine contacts are provided by residues 125–131, Glu149, Asp176, and Asp194; that span reads AAAPGSK. Cys247 serves as the catalytic Nucleophile.

Belongs to the class I-like SAM-binding methyltransferase superfamily. RsmB/NOP family.

It is found in the cytoplasm. The enzyme catalyses cytidine(1407) in 16S rRNA + S-adenosyl-L-methionine = 5-methylcytidine(1407) in 16S rRNA + S-adenosyl-L-homocysteine + H(+). Specifically methylates the cytosine at position 1407 (m5C1407) of 16S rRNA. This chain is Ribosomal RNA small subunit methyltransferase F, found in Escherichia coli (strain SMS-3-5 / SECEC).